Reading from the N-terminus, the 349-residue chain is Two pore potassium channel b (349 aa).

Residues 1 to 53 (MAALDQQPLLHDGGDQKPPPEGAARRFRRCRTAPSSEPPPTDKDNSSAADAPP) are disordered. The Cytoplasmic portion of the chain corresponds to 1–66 (MAALDQQPLL…FTGGGRPSFR (66 aa)). Residues 67-87 (LVGLLLVAYLLLGTIAFYLAM) traverse the membrane as a helical segment. Residues 100–119 (DALYFCVVTMTTVGYGDLVP) constitute an intramembrane region (pore-forming). The helical transmembrane segment at 123 to 143 (AAKLLACAFVFAGVAVVGTFL) threads the bilayer. The Cytoplasmic segment spans residues 144–180 (SKAADYLVEKQEALLFRALHSHTMVRAMEMNKVRYKL). The chain crosses the membrane as a helical span at residues 181 to 201 (YTAGLLLVAAVASGTVVLWKV). Positions 208 to 227 (DAFYCVCATVTTLGYGDRSF) form an intramembrane region, pore-forming. Residues 234–254 (AFAVAWITVSTVVVALFFLYA) traverse the membrane as a helical segment. Topologically, residues 255-349 (AELYTERRQR…PTPDPPPSLR (95 aa)) are cytoplasmic. 2 consecutive EF-hand domains span residues 271–306 (LRRR…ELGK) and 310–345 (EDIS…PDPP). Positions 284, 286, 288, 290, 295, 323, 325, 327, 329, and 334 each coordinate Ca(2+). The interval 326-349 (HSGTLSPADLAAAQPTPDPPPSLR) is disordered.

Belongs to the two pore domain potassium channel (TC 1.A.1.7) family. Homodimer.

It localises to the vacuole membrane. Highly selective inward-rectifying potassium channel that is specifically located in the tonoplast of protein storage vacuoles. Functions independently of the voltage difference across the membrane. The chain is Two pore potassium channel b (TPKB) from Oryza sativa subsp. japonica (Rice).